The chain runs to 159 residues: ATP synthase subunit delta, mitochondrial (159 aa).

The transit peptide at 1-23 directs the protein to the mitochondrion; that stretch reads MFRLSAARTLAKSVNTVVAKRTY.

The protein belongs to the ATPase epsilon chain family. As to quaternary structure, F-type ATPases have 2 components, CF(1) - the catalytic core - and CF(0) - the membrane proton channel. CF(1) has five subunits: alpha(3), beta(3), gamma(1), delta(1), epsilon(1). CF(0) has three main subunits: a, b and c.

It localises to the mitochondrion. It is found in the mitochondrion inner membrane. Mitochondrial membrane ATP synthase (F(1)F(0) ATP synthase or Complex V) produces ATP from ADP in the presence of a proton gradient across the membrane which is generated by electron transport complexes of the respiratory chain. F-type ATPases consist of two structural domains, F(1) - containing the extramembraneous catalytic core, and F(0) - containing the membrane proton channel, linked together by a central stalk and a peripheral stalk. During catalysis, ATP turnover in the catalytic domain of F(1) is coupled via a rotary mechanism of the central stalk subunits to proton translocation. Part of the complex F(1) domain and of the central stalk which is part of the complex rotary element. Rotation of the central stalk against the surrounding alpha(3)beta(3) subunits leads to hydrolysis of ATP in three separate catalytic sites on the beta subunits. This Kluyveromyces lactis (strain ATCC 8585 / CBS 2359 / DSM 70799 / NBRC 1267 / NRRL Y-1140 / WM37) (Yeast) protein is ATP synthase subunit delta, mitochondrial (ATP16).